Here is a 105-residue protein sequence, read N- to C-terminus: Small ribosomal subunit protein uS10 (105 aa).

Belongs to the universal ribosomal protein uS10 family. Part of the 30S ribosomal subunit.

Its function is as follows. Involved in the binding of tRNA to the ribosomes. The polypeptide is Small ribosomal subunit protein uS10 (Nostoc punctiforme (strain ATCC 29133 / PCC 73102)).